Reading from the N-terminus, the 291-residue chain is Protease HtpX (291 aa).

The next 2 helical transmembrane spans lie at 4 to 24 and 37 to 57; these read IVIFLLTNLAVMVVFGILLTC and IISGLFGFCGAFISLLMSKFI. His-139 serves as a coordination point for Zn(2+). The active site involves Glu-140. His-143 contributes to the Zn(2+) binding site. 2 consecutive transmembrane segments (helical) span residues 147–167 and 195–215; these read GDMVTITLISGIVNTFVIFIS and IVSTILELAFGILASIIVLWF. Glu-220 is a binding site for Zn(2+).

The protein belongs to the peptidase M48B family. Zn(2+) serves as cofactor.

It localises to the cell membrane. The polypeptide is Protease HtpX (Baumannia cicadellinicola subsp. Homalodisca coagulata).